Reading from the N-terminus, the 346-residue chain is Anthranilate phosphoribosyltransferase (346 aa).

5-phospho-alpha-D-ribose 1-diphosphate is bound by residues Gly-81, 84–85, 91–94, 109–117, and Ser-121; these read GD, NVST, and KHGNRSVSS. Gly-81 contributes to the anthranilate binding site. Ser-93 contacts Mg(2+). Asn-112 contacts anthranilate. Arg-167 serves as a coordination point for anthranilate. Mg(2+)-binding residues include Asp-226 and Glu-227.

Belongs to the anthranilate phosphoribosyltransferase family. As to quaternary structure, homodimer. Mg(2+) serves as cofactor.

It carries out the reaction N-(5-phospho-beta-D-ribosyl)anthranilate + diphosphate = 5-phospho-alpha-D-ribose 1-diphosphate + anthranilate. The protein operates within amino-acid biosynthesis; L-tryptophan biosynthesis; L-tryptophan from chorismate: step 2/5. In terms of biological role, catalyzes the transfer of the phosphoribosyl group of 5-phosphorylribose-1-pyrophosphate (PRPP) to anthranilate to yield N-(5'-phosphoribosyl)-anthranilate (PRA). The chain is Anthranilate phosphoribosyltransferase from Hahella chejuensis (strain KCTC 2396).